The sequence spans 269 residues: Pertussis toxin subunit 1 homolog (269 aa).

An N-terminal signal peptide occupies residues 1–34 (MRCTRAIRQTARTGWLTWLAILAVTAPVTSPAWA).

It belongs to the bacterial exotoxin subunit A family.

In Bordetella bronchiseptica (strain ATCC BAA-588 / NCTC 13252 / RB50) (Alcaligenes bronchisepticus), this protein is Pertussis toxin subunit 1 homolog (ptxA).